We begin with the raw amino-acid sequence, 332 residues long: UDP-N-acetylenolpyruvoylglucosamine reductase (332 aa).

Residues 15–184 form the FAD-binding PCMH-type domain; sequence IDVSAACFLE…TYVSFRLSKR (170 aa). Residue R160 is part of the active site. The Proton donor role is filled by S232. Residue E328 is part of the active site.

The protein belongs to the MurB family. FAD serves as cofactor.

Its subcellular location is the cytoplasm. The catalysed reaction is UDP-N-acetyl-alpha-D-muramate + NADP(+) = UDP-N-acetyl-3-O-(1-carboxyvinyl)-alpha-D-glucosamine + NADPH + H(+). It participates in cell wall biogenesis; peptidoglycan biosynthesis. Functionally, cell wall formation. The chain is UDP-N-acetylenolpyruvoylglucosamine reductase from Bacteroides fragilis (strain ATCC 25285 / DSM 2151 / CCUG 4856 / JCM 11019 / LMG 10263 / NCTC 9343 / Onslow / VPI 2553 / EN-2).